A 337-amino-acid polypeptide reads, in one-letter code: Biotin synthase (337 aa).

Residues 58–283 (PEVEVEGIIS…RTILRFAGGR (226 aa)) enclose the Radical SAM core domain. 3 residues coordinate [4Fe-4S] cluster: Cys73, Cys77, and Cys80. 4 residues coordinate [2Fe-2S] cluster: Cys116, Cys149, Cys208, and Arg278.

This sequence belongs to the radical SAM superfamily. Biotin synthase family. Homodimer. It depends on [4Fe-4S] cluster as a cofactor. Requires [2Fe-2S] cluster as cofactor.

It carries out the reaction (4R,5S)-dethiobiotin + (sulfur carrier)-SH + 2 reduced [2Fe-2S]-[ferredoxin] + 2 S-adenosyl-L-methionine = (sulfur carrier)-H + biotin + 2 5'-deoxyadenosine + 2 L-methionine + 2 oxidized [2Fe-2S]-[ferredoxin]. The protein operates within cofactor biosynthesis; biotin biosynthesis; biotin from 7,8-diaminononanoate: step 2/2. Catalyzes the conversion of dethiobiotin (DTB) to biotin by the insertion of a sulfur atom into dethiobiotin via a radical-based mechanism. The chain is Biotin synthase from Rhodococcus jostii (strain RHA1).